A 232-amino-acid chain; its full sequence is AA9 family lytic polysaccharide monooxygenase C (232 aa).

The first 19 residues, 1-19, serve as a signal peptide directing secretion; sequence MKAAVSLALLVAVAGAASA. The Cu(2+) site is built by histidine 20 and histidine 91. Cysteine 61 and cysteine 180 are joined by a disulfide. Positions 166 and 175 each coordinate O2. Tyrosine 177 is a Cu(2+) binding site. Asparagine 184 is a glycosylation site (N-linked (GlcNAc...) asparagine).

Belongs to the polysaccharide monooxygenase AA9 family. Requires Cu(2+) as cofactor.

It is found in the secreted. It catalyses the reaction [(1-&gt;4)-beta-D-glucosyl]n+m + reduced acceptor + O2 = 4-dehydro-beta-D-glucosyl-[(1-&gt;4)-beta-D-glucosyl]n-1 + [(1-&gt;4)-beta-D-glucosyl]m + acceptor + H2O.. In terms of biological role, lytic polysaccharide monooxygenase (LPMO) that depolymerizes crystalline and amorphous polysaccharides via the oxidation of scissile alpha- or beta-(1-4)-glycosidic bonds, yielding C1 or C4 oxidation products. Catalysis by LPMOs requires the reduction of the active-site copper from Cu(II) to Cu(I) by a reducing agent and H(2)O(2) or O(2) as a cosubstrate. The protein is AA9 family lytic polysaccharide monooxygenase C of Malbranchea cinnamomea (Thermophilic fungus).